A 282-amino-acid polypeptide reads, in one-letter code: Putative 23S rRNA (guanine-N(1)-)-methyltransferase YxjB (282 aa).

Zn(2+) is bound by residues C12, C15, C29, and H34. Residue 103-104 (EG) participates in S-adenosyl-L-methionine binding.

Belongs to the methyltransferase superfamily. RlmA family.

This is Putative 23S rRNA (guanine-N(1)-)-methyltransferase YxjB (yxjB) from Bacillus subtilis (strain 168).